Here is a 401-residue protein sequence, read N- to C-terminus: CCA-adding enzyme (401 aa).

Positions 32 and 35 each coordinate ATP. CTP contacts are provided by glycine 32 and arginine 35. The Mg(2+) site is built by aspartate 45 and aspartate 47. ATP is bound by residues arginine 116, aspartate 159, arginine 162, arginine 165, and arginine 168. Positions 116, 159, 162, 165, and 168 each coordinate CTP.

The protein belongs to the tRNA nucleotidyltransferase/poly(A) polymerase family. Bacterial CCA-adding enzyme type 3 subfamily. In terms of assembly, homodimer. Mg(2+) is required as a cofactor.

The catalysed reaction is a tRNA precursor + 2 CTP + ATP = a tRNA with a 3' CCA end + 3 diphosphate. The enzyme catalyses a tRNA with a 3' CCA end + 2 CTP + ATP = a tRNA with a 3' CCACCA end + 3 diphosphate. Functionally, catalyzes the addition and repair of the essential 3'-terminal CCA sequence in tRNAs without using a nucleic acid template. Adds these three nucleotides in the order of C, C, and A to the tRNA nucleotide-73, using CTP and ATP as substrates and producing inorganic pyrophosphate. tRNA 3'-terminal CCA addition is required both for tRNA processing and repair. Also involved in tRNA surveillance by mediating tandem CCA addition to generate a CCACCA at the 3' terminus of unstable tRNAs. While stable tRNAs receive only 3'-terminal CCA, unstable tRNAs are marked with CCACCA and rapidly degraded. The chain is CCA-adding enzyme from Streptococcus mutans serotype c (strain ATCC 700610 / UA159).